The sequence spans 376 residues: RNA binding protein fox-1 homolog 1 (376 aa).

A disordered region spans residues 1–126 (MEEKGSRMVQ…QPKRLHVSNI (126 aa)). Residues 72–89 (QTHSEQSPADTNAQTVSG) are compositionally biased toward polar residues. Positions 90–101 (TATQTDDAAPTD) are enriched in low complexity. The span at 102-115 (GQPQTQPSENTENK) shows a compositional bias: polar residues. Residues 119–195 (KRLHVSNIPF…RKIEVNNATA (77 aa)) form the RRM domain. Arg319 carries the asymmetric dimethylarginine modification.

Binds to the C-terminus of ATXN2.

The protein localises to the nucleus. Its subcellular location is the cytoplasm. In terms of biological role, RNA-binding protein that regulates alternative splicing events by binding to 5'-UGCAUGU-3' elements. Prevents binding of U2AF2 to the 3'-splice site. Regulates alternative splicing of tissue-specific exons and of differentially spliced exons during erythropoiesis. In Macaca fascicularis (Crab-eating macaque), this protein is RNA binding protein fox-1 homolog 1 (RBFOX1).